Consider the following 450-residue polypeptide: Trigger factor (450 aa).

Residues 163–249 enclose the PPIase FKBP-type domain; that stretch reads EDFVLIDYQG…LKEIQEQILP (87 aa). A compositionally biased stretch (acidic residues) spans 431 to 443; the sequence is PEVETEVSESAAD. The tract at residues 431 to 450 is disordered; that stretch reads PEVETEVSESAADVEDKTDQ.

Belongs to the FKBP-type PPIase family. Tig subfamily.

It is found in the cytoplasm. It carries out the reaction [protein]-peptidylproline (omega=180) = [protein]-peptidylproline (omega=0). Functionally, involved in protein export. Acts as a chaperone by maintaining the newly synthesized protein in an open conformation. Functions as a peptidyl-prolyl cis-trans isomerase. The polypeptide is Trigger factor (Desulforapulum autotrophicum (strain ATCC 43914 / DSM 3382 / VKM B-1955 / HRM2) (Desulfobacterium autotrophicum)).